A 478-amino-acid polypeptide reads, in one-letter code: Nuclear distribution protein PAC1 (478 aa).

Residues 9–41 (QAEELHKAMIAYLLSANLPKSAAALREELADSV) enclose the LisH domain. Positions 60–87 (TSVVRLQKKIMDLESRNNALQSELDSAT) form a coiled coil. 8 WD repeats span residues 113 to 154 (SHRE…RTIK), 156 to 196 (HTKA…KNIR), 200 to 247 (GHDH…CVKT), 250 to 289 (GHVD…TKST), 292 to 352 (GHEH…IKTL), 354 to 393 (GHDN…KCVR), 398 to 439 (AHGH…AASA), and 440 to 477 (INGV…RVFA).

The protein belongs to the WD repeat LIS1/nudF family. Self-associates. Interacts with NDL1 and dynein.

It localises to the cytoplasm. The protein localises to the cytoskeleton. Its subcellular location is the spindle pole. Positively regulates the activity of the minus-end directed microtubule motor protein dynein. May enhance dynein-mediated microtubule sliding by targeting dynein to the microtubule plus end. Required for nuclear migration during vegetative growth as well as development. Required for retrograde early endosome (EE) transport from the hyphal tip. Required for localization of dynein to the mitotic spindle poles. Recruits additional proteins to the dynein complex at SPBs. This is Nuclear distribution protein PAC1 from Paracoccidioides brasiliensis (strain Pb18).